A 736-amino-acid polypeptide reads, in one-letter code: Catalase-peroxidase (736 aa).

Residues 96 to 224 constitute a cross-link (tryptophyl-tyrosyl-methioninium (Trp-Tyr) (with M-250)); that stretch reads WHSAGTYRTG…LAAVQMGLIY (129 aa). The active-site Proton acceptor is the His97. Positions 224-250 form a cross-link, tryptophyl-tyrosyl-methioninium (Tyr-Met) (with W-96); it reads YVNPEGPDGNPDPVASGRDVRETFGRM. Position 265 (His265) interacts with heme b.

It belongs to the peroxidase family. Peroxidase/catalase subfamily. As to quaternary structure, homodimer or homotetramer. Heme b is required as a cofactor. In terms of processing, formation of the three residue Trp-Tyr-Met cross-link is important for the catalase, but not the peroxidase activity of the enzyme.

It catalyses the reaction H2O2 + AH2 = A + 2 H2O. It carries out the reaction 2 H2O2 = O2 + 2 H2O. Bifunctional enzyme with both catalase and broad-spectrum peroxidase activity. In Pelobacter propionicus (strain DSM 2379 / NBRC 103807 / OttBd1), this protein is Catalase-peroxidase.